The following is an 86-amino-acid chain: Neurotoxin-like protein NTL2 (86 aa).

The first 21 residues, M1–T21, serve as a signal peptide directing secretion. Cystine bridges form between C24–C45, C38–C63, C67–C78, and C79–C84.

The protein belongs to the three-finger toxin family. Short-chain subfamily. Orphan group I sub-subfamily. Expressed by the venom gland.

The protein resides in the secreted. This Naja atra (Chinese cobra) protein is Neurotoxin-like protein NTL2.